The chain runs to 197 residues: UPF0462 protein C4orf33 homolog (197 aa).

Belongs to the UPF0462 family.

The sequence is that of UPF0462 protein C4orf33 homolog from Danio rerio (Zebrafish).